A 258-amino-acid chain; its full sequence is MRRLCIILLVYVYATFATKGICKQDEDVRYMGIDVVVKVTKKTSGSDTVCQALRTTFEAAHKGDGANDSLSTEYVDDYSEEEEYEYDESFLEGFVIGSTYYTIVGGGLSVTFGFTGCPTVKSVSEYAKGRIVFIRLSSDAPWRDTNPMSINRTEALALLEKCETSIDIKCSNETVSETTYGLASLAPHITQATERGNIIGSTLVDTDCVENLDVTVHLGEMCRKTSDLSKRDSLKVKNGELLDDDTFSIHTPKLKACN.

The signal sequence occupies residues 1 to 17; it reads MRRLCIILLVYVYATFA. 3 N-linked (GlcNAc...) asparagine; by host glycosylation sites follow: N67, N151, and N172.

The protein belongs to the poxviruses A41 family.

The chain is Protein T1 from Rabbit fibroma virus (strain Kasza) (RFV).